The following is a 402-amino-acid chain: Fugralins biosynthesis cluster protein 2 (402 aa).

A run of 5 helical transmembrane segments spans residues 28–48 (NCLAYTVLILCAVITTICFLL), 109–129 (ILIFGVCYSFVLPFLKIAILV), 145–165 (IFWWGCMVIGFVQATSNTAIV), 232–252 (VIFGLGLLACVSAAVRLAVTV), and 264–284 (LAPLVFWATAEMTCGFFIVCV). 2 disordered regions span residues 312 to 335 (NPNTADRYAKSGTKGSQLSSTGPK) and 378 to 402 (TQDNRSTSDSEGHAAFPASQKPWGV). Positions 324–334 (TKGSQLSSTGP) are enriched in polar residues. Asn381 carries N-linked (GlcNAc...) asparagine glycosylation.

Belongs to the SAT4 family.

The protein localises to the membrane. It functions in the pathway secondary metabolite biosynthesis. Part of the gene cluster that mediates the biosynthesis of the tetraketides fugralins such as linear fugralin A and cyclic fugralin B, volatile compounds that play a role in the asexual reproductive cycle but are not involved in pathogenicity. One of the key features of fugralins is the presence of a double methyl group, which is only rarely encountered in fungal secondary metabolites. As the fugralins cluster does not contain an independent methyltransferase, the PKS FGR1 is probably responsible for adding two methyl groups to the same carbon atom. Fugralin B is similar to fugralin A except for a cyclization between the carboxylic acid C-8 and the alcohol on C-4 resulting in a six membered lactone ring, probably catalyzed by the cyclase FGR4. The exact role of the individual cluster genes remains unknown and further work is needed to unravel the biosynthetic pathway. The chain is Fugralins biosynthesis cluster protein 2 from Gibberella zeae (strain ATCC MYA-4620 / CBS 123657 / FGSC 9075 / NRRL 31084 / PH-1) (Wheat head blight fungus).